The sequence spans 127 residues: Insulin-like growth factor 3.L (127 aa).

The N-terminal stretch at 1-49 is a signal peptide; it reads MPVTAMCLQDSKKLKKAKLTRKKVTPFPFSRMVLCLSLVFTLYVEATNA. The segment at 49-80 is b; it reads ARCLRPRSKELLCGSELVDILQFICGPTGFYV. 3 disulfides stabilise this stretch: cysteine 61-cysteine 99, cysteine 73-cysteine 112, and cysteine 98-cysteine 103. The c stretch occupies residues 81–92; sequence SKGASFRNRNRP. The a stretch occupies residues 93–113; sequence GIVEECCFCGCSVAILESYCA. The tract at residues 114-121 is d; sequence APVTNFTG. A propeptide spans 122–127 (e peptide); that stretch reads REEQKS.

It belongs to the insulin family.

It localises to the secreted. Its function is as follows. The insulin-like growth factors, isolated from plasma, are structurally and functionally related to insulin but have a much higher growth-promoting activity. Promotes anterior neural development. The sequence is that of Insulin-like growth factor 3.L from Xenopus laevis (African clawed frog).